The following is a 188-amino-acid chain: Pyridoxal 5'-phosphate synthase subunit PdxT (188 aa).

47 to 49 (GES) serves as a coordination point for L-glutamine. The active-site Nucleophile is Cys-79. Residues Arg-105 and 134-135 (IR) each bind L-glutamine. Active-site charge relay system residues include His-170 and Glu-172.

This sequence belongs to the glutaminase PdxT/SNO family. In terms of assembly, in the presence of PdxS, forms a dodecamer of heterodimers. Only shows activity in the heterodimer.

It catalyses the reaction aldehydo-D-ribose 5-phosphate + D-glyceraldehyde 3-phosphate + L-glutamine = pyridoxal 5'-phosphate + L-glutamate + phosphate + 3 H2O + H(+). The enzyme catalyses L-glutamine + H2O = L-glutamate + NH4(+). The protein operates within cofactor biosynthesis; pyridoxal 5'-phosphate biosynthesis. Catalyzes the hydrolysis of glutamine to glutamate and ammonia as part of the biosynthesis of pyridoxal 5'-phosphate. The resulting ammonia molecule is channeled to the active site of PdxS. This is Pyridoxal 5'-phosphate synthase subunit PdxT from Listeria innocua serovar 6a (strain ATCC BAA-680 / CLIP 11262).